We begin with the raw amino-acid sequence, 118 residues long: UPF0342 protein ABC1519 (118 aa).

Belongs to the UPF0342 family.

The chain is UPF0342 protein ABC1519 from Shouchella clausii (strain KSM-K16) (Alkalihalobacillus clausii).